We begin with the raw amino-acid sequence, 341 residues long: tRNA N6-adenosine threonylcarbamoyltransferase (341 aa).

2 residues coordinate Fe cation: histidine 111 and histidine 115. Substrate contacts are provided by residues 134–138, aspartate 167, glycine 180, and asparagine 276; that span reads LVSGG. Aspartate 304 contacts Fe cation.

This sequence belongs to the KAE1 / TsaD family. Fe(2+) serves as cofactor.

It is found in the cytoplasm. The enzyme catalyses L-threonylcarbamoyladenylate + adenosine(37) in tRNA = N(6)-L-threonylcarbamoyladenosine(37) in tRNA + AMP + H(+). Its function is as follows. Required for the formation of a threonylcarbamoyl group on adenosine at position 37 (t(6)A37) in tRNAs that read codons beginning with adenine. Is involved in the transfer of the threonylcarbamoyl moiety of threonylcarbamoyl-AMP (TC-AMP) to the N6 group of A37, together with TsaE and TsaB. TsaD likely plays a direct catalytic role in this reaction. The sequence is that of tRNA N6-adenosine threonylcarbamoyltransferase from Pseudomonas putida (strain ATCC 700007 / DSM 6899 / JCM 31910 / BCRC 17059 / LMG 24140 / F1).